The following is a 74-amino-acid chain: uncharacterized protein (74 aa).

An N-terminal signal peptide occupies residues 1-25 (MMMTDLPENIRKTAVALLRLGEATA).

This is an uncharacterized protein from Archaeoglobus fulgidus (strain ATCC 49558 / DSM 4304 / JCM 9628 / NBRC 100126 / VC-16).